A 179-amino-acid polypeptide reads, in one-letter code: Small capsomere-interacting protein (179 aa).

The tract at residues 107–179 (IPLPPETGEF…QAPGTKGKKQ (73 aa)) is disordered. Low complexity predominate over residues 118–171 (TGGTSSSVRSASGASGGAASTAASGGSASAAASGASGGSASQSDVSSRSRSQQA).

It belongs to the herpesviridae small capsomere-interacting protein family. As to quaternary structure, interacts with the major capsid protein/MCP.

The protein resides in the virion. It localises to the host nucleus. In terms of biological role, participates in the assembly of the infectious particles by decorating the outer surface of the capsid shell and thus forming a layer between the capsid and the tegument. Complexes composed of the major capsid protein and small capsomere-interacting protein/SCP assemble together in the host cytoplasm and are translocated to the nucleus, where they accumulate and participate in capsid assembly. This is Small capsomere-interacting protein from Equine herpesvirus 2 (strain 86/87) (EHV-2).